Here is a 329-residue protein sequence, read N- to C-terminus: MASQLTDAFARKFYYLRLSITDVCNFRCTYCLPDGYKPSGVTNKGFLTVDEIRRVTRAFASLGTEKVRLTGGEPSLRRDFTDIIAAVRENDAIRQIAVTTNGYRLERDVANWRDAGLTGINVSVDSLDARQFHAITGQDKFNQVMAGIDAAFEAGFEKVKVNTVLMRDVNHHQLDTFLNWIQHRPIQLRFIELMETGEGSELFRKHHISGQVLRDELLRRGWIHQLRQRSDGPAQVFCHPDYAGEIGLIMPYEKDFCATCNRLRVSSIGKLYLCLFGEGGVNLRDLLEDDTQQQALEARISVALREKKQTHFLHQNNTGITQNLSYIGG.

The region spanning 8-234 is the Radical SAM core domain; that stretch reads AFARKFYYLR…QLRQRSDGPA (227 aa). Residue R17 participates in GTP binding. C24 and C28 together coordinate [4Fe-4S] cluster. Y30 serves as a coordination point for S-adenosyl-L-methionine. C31 contributes to the [4Fe-4S] cluster binding site. GTP is bound at residue R68. An S-adenosyl-L-methionine-binding site is contributed by G72. Residue T99 participates in GTP binding. Residue S123 participates in S-adenosyl-L-methionine binding. K160 is a binding site for GTP. M194 serves as a coordination point for S-adenosyl-L-methionine. C257 and C260 together coordinate [4Fe-4S] cluster. 262-264 is a GTP binding site; that stretch reads RLR. C274 provides a ligand contact to [4Fe-4S] cluster.

This sequence belongs to the radical SAM superfamily. MoaA family. Monomer and homodimer. [4Fe-4S] cluster is required as a cofactor.

It catalyses the reaction GTP + AH2 + S-adenosyl-L-methionine = (8S)-3',8-cyclo-7,8-dihydroguanosine 5'-triphosphate + 5'-deoxyadenosine + L-methionine + A + H(+). Its pathway is cofactor biosynthesis; molybdopterin biosynthesis. Functionally, catalyzes the cyclization of GTP to (8S)-3',8-cyclo-7,8-dihydroguanosine 5'-triphosphate. This Shigella boydii serotype 18 (strain CDC 3083-94 / BS512) protein is GTP 3',8-cyclase.